The following is a 79-amino-acid chain: Moronecidin (79 aa).

A signal peptide spans 1 to 22 (MKCATLFLVLSMVVLMAEPGDA). The residue at position 44 (Gly-44) is a Glycine amide. Residues 45–79 (GKAEQDQQDQQYQQEQQEQQAQQYQRFNRERAAFD) are disordered. Residues 47-79 (AEQDQQDQQYQQEQQEQQAQQYQRFNRERAAFD) constitute a propeptide that is removed on maturation. Residues 52-69 (QDQQYQQEQQEQQAQQYQ) show a composition bias toward low complexity.

In terms of tissue distribution, expressed in mast cells in gill, skin and gut, and in lining blood vessels in the viscera. Also in intestine, spleen, anterior kidney, and blood cells.

Its subcellular location is the secreted. Its function is as follows. Antimicrobial peptide with broad-spectrum activity against Gram-positive and Gram-negative bacteria as well as against a variety of fungi. Rapidly inactivates channel catfish herpesvirus (ED(50)=4 uM) and frog virus 3 (ED(50)=13 uM) over a wide temperature range. Seems to disrupt the membranes by adopting an alpha helical conformation and forming toroidal pores. Has hemolytic activity. The polypeptide is Moronecidin (Morone saxatilis (Striped bass)).